The primary structure comprises 545 residues: Probable sucrose-6-phosphate hydrolase (545 aa).

Residues leucine 107–aspartate 110, glutamine 126, phenylalanine 169–serine 170, arginine 230–aspartate 231, and glutamate 285 each bind substrate. Residue aspartate 110 is part of the active site.

This sequence belongs to the glycosyl hydrolase 32 family.

The protein resides in the cytoplasm. The enzyme catalyses Hydrolysis of terminal non-reducing beta-D-fructofuranoside residues in beta-D-fructofuranosides.. It functions in the pathway glycan biosynthesis; sucrose metabolism. In terms of biological role, enables the bacterium to metabolize sucrose as a sole carbon source. This Psychromonas ingrahamii (strain DSM 17664 / CCUG 51855 / 37) protein is Probable sucrose-6-phosphate hydrolase.